The chain runs to 539 residues: Neutral amino acid transporter B(0) (539 aa).

At Met-1 the chain carries N-acetylmethionine. The Cytoplasmic segment spans residues 1–52 (MVADPPKGDPKGYAAAEPTANGVSMLVPIEDVGSLKGGRCGSGDQVRRCLRA). Residues 53 to 82 (NLLVLLTVVAVVAGVALGLGVSGAGGAFAL) form a helical membrane-spanning segment. Over 83-95 (GPARLEAFSFPGE) the chain is Extracellular. The helical transmembrane segment at 96-117 (LLLRLLKMIILPLVVCSLIGGA) threads the bilayer. Residues 118-131 (ASLDPSALGRLGAW) lie on the Cytoplasmic side of the membrane. The helical transmembrane segment at 132–154 (ALLFFLVTTLLASALGVGLALAL) threads the bilayer. The Extracellular portion of the chain corresponds to 155–223 (QPGAAFAAIN…GTLVKVPTGG (69 aa)). N-linked (GlcNAc...) asparagine glycans are attached at residues Asn-164 and Asn-213. A helical membrane pass occupies residues 224–247 (EVEGMNILGLVVFAIIFGVALRKL). The Cytoplasmic segment spans residues 248 to 256 (GPEGELLIR). Residues 257–284 (FFNSFNDATMVLVSWIMWYAPVGILFLV) form a helical membrane-spanning segment. At 285 to 305 (AGKIVEMENVGLLFASLGKYI) the chain is on the extracellular side. The chain crosses the membrane as a helical span at residues 306 to 327 (LCCLLGHAIHGLLTLPLIYFLF). Over 328–332 (ARKNP) the chain is Cytoplasmic. Positions 333 to 363 (YRFLWGIMTPLATAFGTSSSSATLPLMMKCV) form an intramembrane region, discontinuously helical. At 364 to 372 (EEKNGVARH) the chain is on the cytoplasmic side. A helical transmembrane segment spans residues 373–399 (ISRFILPIGATVNMDGAALFQCVAAVF). Gly-381, Thr-383, and Asn-385 together coordinate Na(+). Topologically, residues 400–412 (IAQLNHRSLDFVK) are extracellular. Residues 413–446 (IITILVTATASSVGAAGIPSGGVLTLAIILEAVN) constitute an intramembrane region (discontinuously helical). Residues 447–459 (LPVHDISLILAVD) are Extracellular-facing. Residues 460–481 (WLVDRSCTVLNVEGDAFGAGLL) form a helical membrane-spanning segment. Asn-470 and Asp-474 together coordinate Na(+). Topologically, residues 482–539 (QSYLDRTENCNSVPELIQVKSEMPLAALPVPGEEGNPLLKGCPGPAGDADTCEKESVM) are cytoplasmic. 3 positions are modified to phosphoserine: Ser-493, Ser-502, and Ser-537. Positions 518–539 (PLLKGCPGPAGDADTCEKESVM) are disordered.

Belongs to the dicarboxylate/amino acid:cation symporter (DAACS) (TC 2.A.23) family. SLC1A5 subfamily. Homotrimer.

It localises to the cell membrane. The protein localises to the melanosome. The enzyme catalyses L-glutamine(out) + L-serine(in) + Na(+)(out) = L-glutamine(in) + L-serine(out) + Na(+)(in). It catalyses the reaction L-glutamine(in) + L-serine(out) + Na(+)(out) = L-glutamine(out) + L-serine(in) + Na(+)(in). It carries out the reaction L-threonine(in) + L-glutamine(out) + Na(+)(out) = L-threonine(out) + L-glutamine(in) + Na(+)(in). The catalysed reaction is L-threonine(out) + L-glutamine(in) + Na(+)(out) = L-threonine(in) + L-glutamine(out) + Na(+)(in). The enzyme catalyses L-asparagine(in) + L-glutamine(out) + Na(+)(out) = L-asparagine(out) + L-glutamine(in) + Na(+)(in). It catalyses the reaction L-asparagine(out) + L-glutamine(in) + Na(+)(out) = L-asparagine(in) + L-glutamine(out) + Na(+)(in). It carries out the reaction L-glutamine(in) + L-alanine(out) + Na(+)(out) = L-glutamine(out) + L-alanine(in) + Na(+)(in). The catalysed reaction is L-valine(out) + L-glutamine(in) + Na(+)(out) = L-valine(in) + L-glutamine(out) + Na(+)(in). The enzyme catalyses L-glutamine(in) + L-methionine(out) + Na(+)(out) = L-glutamine(out) + L-methionine(in) + Na(+)(in). It catalyses the reaction L-glutamine(in) + L-glutamate(out) + Na(+)(out) + H(+)(out) = L-glutamine(out) + L-glutamate(in) + Na(+)(in) + H(+)(in). It carries out the reaction D-serine(in) + L-glutamine(out) + Na(+)(out) = D-serine(out) + L-glutamine(in) + Na(+)(in). The catalysed reaction is D-serine(in) + L-alanine(out) + Na(+)(out) = D-serine(out) + L-alanine(in) + Na(+)(in). The enzyme catalyses nitrate(in) = nitrate(out). It catalyses the reaction iodide(out) = iodide(in). It carries out the reaction thiocyanate(in) = thiocyanate(out). Its function is as follows. Sodium-coupled antiporter of neutral amino acids. In a tri-substrate transport cycle, exchanges neutral amino acids between the extracellular and intracellular compartments, coupled to the inward cotransport of at least one sodium ion. The preferred substrate is the essential amino acid L-glutamine, a precursor for biosynthesis of proteins, nucleotides and amine sugars as well as an alternative fuel for mitochondrial oxidative phosphorylation. Exchanges L-glutamine with other neutral amino acids such as L-serine, L-threonine and L-asparagine in a bidirectional way. Provides L-glutamine to proliferating stem and activated cells driving the metabolic switch toward cell differentiation. The transport cycle is usually pH-independent, with the exception of L-glutamate. Transports extracellular L-glutamate coupled to the cotransport of one proton and one sodium ion in exchange for intracellular L-glutamine counter-ion. May provide for L-glutamate uptake in glial cells regulating glutamine/glutamate cycle in the nervous system. Can transport D-amino acids. Mediates D-serine release from the retinal glia potentially affecting NMDA receptor function in retinal neurons. Displays sodium- and amino acid-dependent but uncoupled channel-like anion conductance with a preference SCN(-) &gt;&gt; NO3(-) &gt; I(-) &gt; Cl(-). Through binding of the fusogenic protein syncytin-1/ERVW-1 may mediate trophoblasts syncytialization, the spontaneous fusion of their plasma membranes, an essential process in placental development. The polypeptide is Neutral amino acid transporter B(0) (SLC1A5) (Bos taurus (Bovine)).